We begin with the raw amino-acid sequence, 436 residues long: AP-2 complex subunit mu-B (436 aa).

The MHD domain occupies 170 to 435; that stretch reads RNELFLDVLE…IGRSGIYETR (266 aa). Residues lysine 342, lysine 346, and lysine 355 each coordinate a 1,2-diacyl-sn-glycero-3-phospho-(1D-myo-inositol-3,4,5-trisphosphate).

This sequence belongs to the adaptor complexes medium subunit family. As to quaternary structure, adaptor protein complex 2 (AP-2) is a heterotetramer composed of two large adaptins (alpha-type subunit and beta-type subunit), a medium adaptin (mu-type subunit) and a small adaptin (sigma-type subunit).

It is found in the cell membrane. The protein localises to the membrane. It localises to the coated pit. Its function is as follows. Component of the adaptor complexes which link clathrin to receptors in coated vesicles. Clathrin-associated protein complexes are believed to interact with the cytoplasmic tails of membrane proteins, leading to their selection and concentration. AP50 is a subunit of the plasma membrane adaptor. The complex binds polyphosphoinositide-containing lipids. This is AP-2 complex subunit mu-B (ap2m1b) from Danio rerio (Zebrafish).